Reading from the N-terminus, the 268-residue chain is UPF0354 protein OB2234 (268 aa).

Belongs to the UPF0354 family.

In Oceanobacillus iheyensis (strain DSM 14371 / CIP 107618 / JCM 11309 / KCTC 3954 / HTE831), this protein is UPF0354 protein OB2234.